The following is a 532-amino-acid chain: Apolipoprotein N-acyltransferase (532 aa).

A run of 6 helical transmembrane segments spans residues Ile37–Ala57, Trp75–Val95, Leu106–Ala126, Leu128–Glu148, Val179–Leu199, and Thr207–Leu227. In terms of domain architecture, CN hydrolase spans Val245 to Ser494. Glu289 acts as the Proton acceptor in catalysis. Lys353 is an active-site residue. The active-site Nucleophile is Cys406. The helical transmembrane segment at Gly505 to Leu525 threads the bilayer.

It belongs to the CN hydrolase family. Apolipoprotein N-acyltransferase subfamily.

The protein resides in the cell inner membrane. It catalyses the reaction N-terminal S-1,2-diacyl-sn-glyceryl-L-cysteinyl-[lipoprotein] + a glycerophospholipid = N-acyl-S-1,2-diacyl-sn-glyceryl-L-cysteinyl-[lipoprotein] + a 2-acyl-sn-glycero-3-phospholipid + H(+). The protein operates within protein modification; lipoprotein biosynthesis (N-acyl transfer). In terms of biological role, catalyzes the phospholipid dependent N-acylation of the N-terminal cysteine of apolipoprotein, the last step in lipoprotein maturation. The protein is Apolipoprotein N-acyltransferase of Brucella melitensis biotype 1 (strain ATCC 23456 / CCUG 17765 / NCTC 10094 / 16M).